The primary structure comprises 381 residues: Metacaspase-8 (381 aa).

Active-site residues include His-86 and Cys-140. Position 140 is an S-nitrosocysteine (Cys-140).

Belongs to the peptidase C14B family. Proteolytically processed; by an autocatalytic mechanism.

Functionally, cysteine protease that cleaves specifically after arginine residues. Does not cleave caspase-specific substrates. May be involved in the modulation of programmed cell death activated by oxidative stress. This chain is Metacaspase-8 (AMC8), found in Arabidopsis thaliana (Mouse-ear cress).